Here is a 189-residue protein sequence, read N- to C-terminus: Small ribosomal subunit protein uS7 (189 aa).

This sequence belongs to the universal ribosomal protein uS7 family. As to quaternary structure, component of the small ribosomal subunit.

It is found in the cytoplasm. This chain is Small ribosomal subunit protein uS7 (RPS5), found in Encephalitozoon cuniculi (strain GB-M1) (Microsporidian parasite).